The sequence spans 392 residues: NADH-quinone oxidoreductase subunit D 1 (392 aa).

The protein belongs to the complex I 49 kDa subunit family. As to quaternary structure, NDH-1 is composed of 14 different subunits. Subunits NuoB, C, D, E, F, and G constitute the peripheral sector of the complex.

Its subcellular location is the cell inner membrane. The catalysed reaction is a quinone + NADH + 5 H(+)(in) = a quinol + NAD(+) + 4 H(+)(out). In terms of biological role, NDH-1 shuttles electrons from NADH, via FMN and iron-sulfur (Fe-S) centers, to quinones in the respiratory chain. The immediate electron acceptor for the enzyme in this species is believed to be a menaquinone. Couples the redox reaction to proton translocation (for every two electrons transferred, four hydrogen ions are translocated across the cytoplasmic membrane), and thus conserves the redox energy in a proton gradient. In Cytophaga hutchinsonii (strain ATCC 33406 / DSM 1761 / CIP 103989 / NBRC 15051 / NCIMB 9469 / D465), this protein is NADH-quinone oxidoreductase subunit D 1.